A 137-amino-acid polypeptide reads, in one-letter code: MPTINQLVRKPRKSKVEKSKSPALNVGYNSHKKVQTNVSSPQKRGVATRVGTMTPKKPNSALRKFARVRLSNLIEVTAYIPGIGHNLQEHSVVLLRGGRVKDLPGVRYHIVRGALDTAGVTDRKQGRSKYGTKKPKA.

The disordered stretch occupies residues 1 to 57 (MPTINQLVRKPRKSKVEKSKSPALNVGYNSHKKVQTNVSSPQKRGVATRVGTMTPKK). Asp102 carries the post-translational modification 3-methylthioaspartic acid.

It belongs to the universal ribosomal protein uS12 family. As to quaternary structure, part of the 30S ribosomal subunit. Contacts proteins S8 and S17. May interact with IF1 in the 30S initiation complex.

With S4 and S5 plays an important role in translational accuracy. In terms of biological role, interacts with and stabilizes bases of the 16S rRNA that are involved in tRNA selection in the A site and with the mRNA backbone. Located at the interface of the 30S and 50S subunits, it traverses the body of the 30S subunit contacting proteins on the other side and probably holding the rRNA structure together. The combined cluster of proteins S8, S12 and S17 appears to hold together the shoulder and platform of the 30S subunit. In Streptococcus sanguinis (strain SK36), this protein is Small ribosomal subunit protein uS12.